Consider the following 347-residue polypeptide: N-acetyl-gamma-glutamyl-phosphate reductase (347 aa).

C152 is an active-site residue.

It belongs to the NAGSA dehydrogenase family. Type 1 subfamily.

Its subcellular location is the cytoplasm. It carries out the reaction N-acetyl-L-glutamate 5-semialdehyde + phosphate + NADP(+) = N-acetyl-L-glutamyl 5-phosphate + NADPH + H(+). Its pathway is amino-acid biosynthesis; L-arginine biosynthesis; N(2)-acetyl-L-ornithine from L-glutamate: step 3/4. Its function is as follows. Catalyzes the NADPH-dependent reduction of N-acetyl-5-glutamyl phosphate to yield N-acetyl-L-glutamate 5-semialdehyde. The sequence is that of N-acetyl-gamma-glutamyl-phosphate reductase from Neisseria gonorrhoeae (strain ATCC 700825 / FA 1090).